A 237-amino-acid chain; its full sequence is Ditrans,polycis-undecaprenyl-diphosphate synthase ((2E,6E)-farnesyl-diphosphate specific) (237 aa).

Residue Asp11 is part of the active site. Residue Asp11 coordinates Mg(2+). Substrate contacts are provided by residues 12–15, Trp16, Arg24, His28, and 56–58; these read GNGR and SIE. Asn59 functions as the Proton acceptor in the catalytic mechanism. Residues Arg62, Arg179, and 185–187 contribute to the substrate site; that span reads RLS. Glu198 lines the Mg(2+) pocket.

It belongs to the UPP synthase family. In terms of assembly, homodimer. Mg(2+) is required as a cofactor.

It catalyses the reaction 8 isopentenyl diphosphate + (2E,6E)-farnesyl diphosphate = di-trans,octa-cis-undecaprenyl diphosphate + 8 diphosphate. Its function is as follows. Catalyzes the sequential condensation of isopentenyl diphosphate (IPP) with (2E,6E)-farnesyl diphosphate (E,E-FPP) to yield (2Z,6Z,10Z,14Z,18Z,22Z,26Z,30Z,34E,38E)-undecaprenyl diphosphate (di-trans,octa-cis-UPP). UPP is the precursor of glycosyl carrier lipid in the biosynthesis of bacterial cell wall polysaccharide components such as peptidoglycan and lipopolysaccharide. The chain is Ditrans,polycis-undecaprenyl-diphosphate synthase ((2E,6E)-farnesyl-diphosphate specific) from Coxiella burnetii (strain RSA 493 / Nine Mile phase I).